Reading from the N-terminus, the 301-residue chain is Zinc finger protein LEE1 (301 aa).

The segment at 1 to 25 (MDAFENMSVSNHPGGNARRNSQSAN) is disordered. Residues 7–25 (MSVSNHPGGNARRNSQSAN) show a composition bias toward polar residues. Phosphoserine is present on residues Ser-21 and Ser-30. C3H1-type zinc fingers lie at residues 87–114 (DYSH…HSPD) and 123–145 (PCKY…HVLP). Phosphoserine is present on Ser-282.

The chain is Zinc finger protein LEE1 (LEE1) from Saccharomyces cerevisiae (strain ATCC 204508 / S288c) (Baker's yeast).